The following is a 163-amino-acid chain: Neurotrophin-3 (163 aa).

An N-terminal signal peptide occupies residues 1-3 (IQS). Positions 4-119 (TSMDQGILTE…VLNRTSRRKR (116 aa)) are excised as a propeptide. Asn112 carries N-linked (GlcNAc...) asparagine glycosylation. The segment at 114–133 (TSRRKREGKSHRGEYSVCDS) is disordered. Basic and acidic residues predominate over residues 123-133 (SHRGEYSVCDS).

It belongs to the NGF-beta family.

Its subcellular location is the secreted. Seems to promote the survival of visceral and proprioceptive sensory neurons. The sequence is that of Neurotrophin-3 (NTF3) from Lichanura trivirgata (Rosy boa).